Consider the following 1150-residue polypeptide: ATP-dependent helicase/deoxyribonuclease subunit B (1150 aa).

8 to 15 (GRAGSGKS) provides a ligand contact to ATP. The [4Fe-4S] cluster site is built by Cys-786, Cys-1106, Cys-1109, and Cys-1115.

This sequence belongs to the helicase family. AddB/RexB type 1 subfamily. Heterodimer of AddA and AddB. Mg(2+) is required as a cofactor. [4Fe-4S] cluster serves as cofactor.

Functionally, the heterodimer acts as both an ATP-dependent DNA helicase and an ATP-dependent, dual-direction single-stranded exonuclease. Recognizes the chi site generating a DNA molecule suitable for the initiation of homologous recombination. The AddB subunit has 5' -&gt; 3' nuclease activity but not helicase activity. This is ATP-dependent helicase/deoxyribonuclease subunit B from Clostridium botulinum (strain Langeland / NCTC 10281 / Type F).